A 726-amino-acid polypeptide reads, in one-letter code: Catalase-peroxidase (726 aa).

The tract at residues 1–33 is disordered; sequence MSTTDDTHNTLSTGKCPFHQGGHDRSAGAGTAS. Positions 105–226 form a cross-link, tryptophyl-tyrosyl-methioninium (Trp-Tyr) (with M-252); the sequence is WHGAGTYRSI…LGATEMGLIY (122 aa). The Proton acceptor role is filled by His106. Positions 226 to 252 form a cross-link, tryptophyl-tyrosyl-methioninium (Tyr-Met) (with W-105); sequence YVNPEGPDHSGEPLSAAAAIRATFGNM. His267 is a binding site for heme b.

It belongs to the peroxidase family. Peroxidase/catalase subfamily. In terms of assembly, homodimer or homotetramer. Requires heme b as cofactor. In terms of processing, formation of the three residue Trp-Tyr-Met cross-link is important for the catalase, but not the peroxidase activity of the enzyme.

The enzyme catalyses H2O2 + AH2 = A + 2 H2O. It carries out the reaction 2 H2O2 = O2 + 2 H2O. Functionally, bifunctional enzyme with both catalase and broad-spectrum peroxidase activity. The sequence is that of Catalase-peroxidase from Salmonella typhi.